The following is a 631-amino-acid chain: Bromodomain-containing protein 9 (631 aa).

Disordered stretches follow at residues 1-26 (MGKK…PLEK) and 39-116 (VTEL…TLPK). Composition is skewed to basic and acidic residues over residues 9 to 26 (RPEW…PLEK) and 50 to 63 (SYYD…WERH). The segment covering 64 to 73 (KEKKKKKKKK) has biased composition (basic residues). Basic and acidic residues predominate over residues 74 to 85 (SEKEKYADDDER). Positions 86–96 (RRRKEEKKKKR) are enriched in basic residues. The region spanning 166–270 (NEATPHQQLL…HTGFKMMSKQ (105 aa)) is the Bromo domain. The histone H4K5ac H4K8ac and histone H4K5bu H4K8bu binding stretch occupies residues 244–246 (VYN). Positions 571 to 631 (ASVDRVGSRP…SPEPGSTANS (61 aa)) are disordered. The span at 581-590 (SSNLSSLSNA) shows a compositional bias: low complexity.

In terms of assembly, binds acetylated histones H3 and H4. Binds butyrylated histone H4.

It localises to the nucleus. Its function is as follows. Plays a role in chromatin remodeling and regulation of transcription. Acts as a chromatin reader that recognizes and binds acylated histones: binds histones that are acetylated and/or butyrylated. The polypeptide is Bromodomain-containing protein 9 (brd9) (Danio rerio (Zebrafish)).